Here is a 367-residue protein sequence, read N- to C-terminus: Probable thylakoidal processing peptidase 2, chloroplastic (367 aa).

A chloroplast-targeting transit peptide spans 1–68 (MAIRVTFTYS…NTWGPSSGPR (68 aa)). A disordered region spans residues 53–72 (DKSPGSNTWGPSSGPRARPA). Residues 62 to 72 (GPSSGPRARPA) are compositionally biased toward low complexity. The helical transmembrane segment at 185–205 (EDAKAAFTAVTVSLLFRSALA) threads the bilayer. Residues 206–367 (EPKSIPSTSM…VSQKRAVDVS (162 aa)) lie on the Lumenal, thylakoid side of the membrane. Residue Ser-214 is part of the active site.

It belongs to the peptidase S26 family.

It localises to the plastid. It is found in the chloroplast thylakoid membrane. The enzyme catalyses Cleavage of hydrophobic, N-terminal signal or leader sequences from secreted and periplasmic proteins.. Its function is as follows. Cleaves the thylakoid-transfer domain from a chloroplast protein. The protein is Probable thylakoidal processing peptidase 2, chloroplastic (TPP2) of Arabidopsis thaliana (Mouse-ear cress).